Consider the following 356-residue polypeptide: Protein RecA (356 aa).

Residue 67–74 (GPESSGKT) participates in ATP binding.

This sequence belongs to the RecA family.

Its subcellular location is the cytoplasm. Can catalyze the hydrolysis of ATP in the presence of single-stranded DNA, the ATP-dependent uptake of single-stranded DNA by duplex DNA, and the ATP-dependent hybridization of homologous single-stranded DNAs. It interacts with LexA causing its activation and leading to its autocatalytic cleavage. This is Protein RecA from Yersinia pseudotuberculosis serotype I (strain IP32953).